A 223-amino-acid chain; its full sequence is Regulator of G-protein signaling 19 (223 aa).

A disordered region spans residues 1–30 (MPTPPEAEKQQTGPEEADQPPSMSSHDAAP). Over residues 20-29 (PPSMSSHDAA) the composition is skewed to low complexity. Residues Ser24 and Ser103 each carry the phosphoserine modification. Positions 96-212 (SFDKLMHSPA…LSSPAYRALL (117 aa)) constitute an RGS domain. Position 157 is a phosphoserine; by MAPK1 and MAPK3 (Ser157). The interval 213 to 223 (LQGASQSSSEA) is interaction with GIPC.

In terms of assembly, interacts with GIPC PDZ domain. Interacts with GNAO1. In terms of processing, fatty acylated. Heavily palmitoylated in the cysteine string motif. Phosphorylated, mainly on serine residues.

The protein localises to the membrane. In terms of biological role, inhibits signal transduction by increasing the GTPase activity of G protein alpha subunits thereby driving them into their inactive GDP-bound form. Binds to G-alpha subfamily 1 members, with the order G(i)a3 &gt; G(i)a1 &gt; G(o)a &gt;&gt; G(z)a/G(i)a2. Activity on G(z)-alpha is inhibited by phosphorylation and palmitoylation of the G-protein. This Bos taurus (Bovine) protein is Regulator of G-protein signaling 19 (RGS19).